The primary structure comprises 412 residues: MVFRTGSGVAGRGPELRLYDTSDRQVRPVSAAVAPTCKATMYVCGITPYDATHLGHAATYLAFDLIHRLWLDLGHEVHYVQNVTDVDDPLFERADRNGVDWRDLAEREVALFRDDMASLRILPPHDYVAATETIVEIVELVDKMLVSGAAYVIDDEYPDIYFRADATLQFGYESGYDRDTMLRLYEQSGGDPRRPGKNGELDALLWRAARPGEPSWSSPFGPGRPGWHVECAAIALSRIGIGLDIQGGGSDLIFPHHEFTAAHAECVRGERRFARHYVHAGMIGWDEHKMSKSRGNLVLVSTLRAQGAPPSAIRLGLLAGHYRADRFWSSQLLDDAIARLHRWRTAASMPAGPDVADVIARVRGYLADDLDTPKAIAALDGWVTDALEYGGHDAAAPKLLATAIDALLGVDL.

C44 is a binding site for Zn(2+). Residues 44 to 47 (CGIT), T59, and 82 to 84 (NVT) each bind L-cysteinyl-5'-AMP. The 'HIGH' region motif lies at 46–56 (ITPYDATHLGH). Positions 187 to 192 (QSGGDP) match the 'ERGGDP' region motif. Position 227 (W227) interacts with L-cysteinyl-5'-AMP. C231 contacts Zn(2+). L-cysteinyl-5'-AMP is bound at residue 249-251 (GSD). Position 256 (H256) interacts with Zn(2+). I283 lines the L-cysteinyl-5'-AMP pocket. The short motif at 289–293 (KMSKS) is the 'KMSKS' region element.

The protein belongs to the class-I aminoacyl-tRNA synthetase family. MshC subfamily. Monomer. The cofactor is Zn(2+).

The enzyme catalyses 1D-myo-inositol 2-amino-2-deoxy-alpha-D-glucopyranoside + L-cysteine + ATP = 1D-myo-inositol 2-(L-cysteinylamino)-2-deoxy-alpha-D-glucopyranoside + AMP + diphosphate + H(+). Its function is as follows. Catalyzes the ATP-dependent condensation of GlcN-Ins and L-cysteine to form L-Cys-GlcN-Ins. The protein is L-cysteine:1D-myo-inositol 2-amino-2-deoxy-alpha-D-glucopyranoside ligase (mshC) of Mycobacterium leprae (strain TN).